The chain runs to 199 residues: Twist-related protein (199 aa).

The disordered stretch occupies residues 1-43 (MQEHQLSRVTSGNKKKYQSFDDESRDEKRMKCDSTDKLESNSN). Basic and acidic residues predominate over residues 25 to 39 (RDEKRMKCDSTDKLE). The bHLH domain occupies 51–102 (THRVIANIRERQRTQALNQSFSTLRKIIPTLPSDKLSKIQTLRLAAMYIDFL).

In terms of assembly, efficient DNA binding requires dimerization with another bHLH protein. Homodimer. Expression is seen at the point of medusa formation in the ectodermal and endodermal bud tissues, and in the entocodon which gives rise to all smooth and striated muscle cells. After the subumbrellar plate differentiates from the endoderm, strong expression is detected until the medusa detaches from the gonzoid. Expression is observed in the distal part of the medusa but diminishes in entocodon-derived muscles as the tissues differentiate, with expression disappearing completely after stage 8. In later stages expression is seen in the distal and proximal parts of the bud and depending on state of maturity, in the developing gonadal tissue.

Its subcellular location is the nucleus. In terms of biological role, probable transcription factor, which may be responsible for the formation of myoepithelial cells in early muscle development in larva and the formation of non-muscle tissues in later bud stages and mesoderm-like structures in the medusa. The polypeptide is Twist-related protein (Podocoryna carnea (Hydrozoan)).